We begin with the raw amino-acid sequence, 159 residues long: Insulin-like peptide 7 (159 aa).

The first 31 residues, 1 to 31 (MTRMIIQNSGSWTLCGAVLLFVLPLIPTPEA), serve as a signal peptide directing secretion. 3 disulfides stabilise this stretch: C63–C136, C75–C150, and C135–C141. The propeptide at 90–121 (TGNDEAWIKKTTTEPDGSTWLHVNYANMFLRS) is connecting peptide.

Belongs to the insulin family. As to quaternary structure, heterodimer of a B chain and an A chain linked by two disulfide bonds. Broadly expressed at a low level throughout the embryo, except the yolk. Expressed at a moderate level in the embryonic midgut. Larval expression is restricted to ten cells of the ventral nerve cord - in four pairs of centrally located cells in the most posterior abdominal segments and in one pair of dorsally located cells in the A1 or A2 segments.

Its subcellular location is the secreted. Possible ligand of InR/insulin-like receptor. This Drosophila melanogaster (Fruit fly) protein is Insulin-like peptide 7.